The chain runs to 333 residues: Phosphate acyltransferase (333 aa).

Belongs to the PlsX family. Homodimer. Probably interacts with PlsY.

The protein resides in the cytoplasm. It catalyses the reaction a fatty acyl-[ACP] + phosphate = an acyl phosphate + holo-[ACP]. It functions in the pathway lipid metabolism; phospholipid metabolism. In terms of biological role, catalyzes the reversible formation of acyl-phosphate (acyl-PO(4)) from acyl-[acyl-carrier-protein] (acyl-ACP). This enzyme utilizes acyl-ACP as fatty acyl donor, but not acyl-CoA. The chain is Phosphate acyltransferase from Clostridium beijerinckii (strain ATCC 51743 / NCIMB 8052) (Clostridium acetobutylicum).